We begin with the raw amino-acid sequence, 118 residues long: Large ribosomal subunit protein uL18 (118 aa).

Belongs to the universal ribosomal protein uL18 family. In terms of assembly, part of the 50S ribosomal subunit; part of the 5S rRNA/L5/L18/L25 subcomplex. Contacts the 5S and 23S rRNAs.

This is one of the proteins that bind and probably mediate the attachment of the 5S RNA into the large ribosomal subunit, where it forms part of the central protuberance. This is Large ribosomal subunit protein uL18 from Lactobacillus acidophilus (strain ATCC 700396 / NCK56 / N2 / NCFM).